Here is a 709-residue protein sequence, read N- to C-terminus: Nucleobase-ascorbate transporter 12 (709 aa).

The tract at residues 1–145 (MSSSDPKPGP…GSGDPVRRPG (145 aa)) is disordered. Residues 7-19 (KPGPKPGPWPPTP) are compositionally biased toward pro residues. Phosphoserine is present on Ser-40. Positions 41–53 (GETTATDSSSGQL) are enriched in polar residues. 2 stretches are compositionally biased toward basic and acidic residues: residues 89 to 98 (ETDKDKKEKP) and 113 to 122 (QPVKRRRDSD). The next 12 membrane-spanning stretches (helical) occupy residues 190–210 (YLSMLGSLILVPLVIVPAMGG), 218–238 (VVSTVLFVSGITTLLHTSFGS), 240–260 (LPLIQGPSFVFLAPALAIINS), 283–303 (IIIGSAFQAVLGYSGLMSLIL), 308–328 (PVVVAPTVAAVGLSFYSYGFP), 329–349 (LVGKCLEIGVVQILLVIIFAL), 361–381 (IFLIYAVPLSLAITWAAAFLL), 438–458 (WGVPLFNWKMAFVMCVVSVIA), 530–550 (GACVLVIFSLVGKVGGFLASI), 551–571 (PQVMVASLLCFMWAMFTALGL), 585–605 (IIIVGLSLFFSLSVPAYFQQY), and 639–659 (YVMNTLLSMSMVIAFIMAVIL).

Belongs to the nucleobase:cation symporter-2 (NCS2) (TC 2.A.40) family. Ubiquitous.

Its subcellular location is the cell membrane. This Arabidopsis thaliana (Mouse-ear cress) protein is Nucleobase-ascorbate transporter 12 (NAT12).